Here is a 120-residue protein sequence, read N- to C-terminus: NAD(P)H-quinone oxidoreductase subunit 3, chloroplastic (120 aa).

A run of 3 helical transmembrane segments spans residues 9 to 29, 64 to 84, and 88 to 108; these read IFWA…LISG, MFAL…PWAM, and VLGV…IVGS.

It belongs to the complex I subunit 3 family. NDH is composed of at least 16 different subunits, 5 of which are encoded in the nucleus.

The protein resides in the plastid. The protein localises to the chloroplast thylakoid membrane. The catalysed reaction is a plastoquinone + NADH + (n+1) H(+)(in) = a plastoquinol + NAD(+) + n H(+)(out). It catalyses the reaction a plastoquinone + NADPH + (n+1) H(+)(in) = a plastoquinol + NADP(+) + n H(+)(out). In terms of biological role, NDH shuttles electrons from NAD(P)H:plastoquinone, via FMN and iron-sulfur (Fe-S) centers, to quinones in the photosynthetic chain and possibly in a chloroplast respiratory chain. The immediate electron acceptor for the enzyme in this species is believed to be plastoquinone. Couples the redox reaction to proton translocation, and thus conserves the redox energy in a proton gradient. The protein is NAD(P)H-quinone oxidoreductase subunit 3, chloroplastic of Platanus occidentalis (Sycamore).